The primary structure comprises 397 residues: Leucine carboxyl methyltransferase 1 (397 aa).

The interval alanine 17–leucine 61 is disordered. Low complexity predominate over residues proline 26–cysteine 43. Residues arginine 44 to proline 55 show a composition bias toward basic residues. S-adenosyl-L-methionine is bound by residues arginine 119, glycine 142, aspartate 168, aspartate 224–leucine 225, and glutamate 259.

Belongs to the methyltransferase superfamily. LCMT family.

It catalyses the reaction [phosphatase 2A protein]-C-terminal L-leucine + S-adenosyl-L-methionine = [phosphatase 2A protein]-C-terminal L-leucine methyl ester + S-adenosyl-L-homocysteine. Its function is as follows. Methylates the carboxyl group of the C-terminal leucine residue of protein phosphatase 2A catalytic subunits to form alpha-leucine ester residues. This chain is Leucine carboxyl methyltransferase 1 (PPM1), found in Cryptococcus neoformans var. neoformans serotype D (strain B-3501A) (Filobasidiella neoformans).